The sequence spans 393 residues: Arginine biosynthesis bifunctional protein ArgJ (393 aa).

Substrate contacts are provided by T145, K171, T182, E265, N388, and S393. The Nucleophile role is filled by T182.

The protein belongs to the ArgJ family. As to quaternary structure, heterotetramer of two alpha and two beta chains.

The protein resides in the cytoplasm. It carries out the reaction N(2)-acetyl-L-ornithine + L-glutamate = N-acetyl-L-glutamate + L-ornithine. The enzyme catalyses L-glutamate + acetyl-CoA = N-acetyl-L-glutamate + CoA + H(+). The protein operates within amino-acid biosynthesis; L-arginine biosynthesis; L-ornithine and N-acetyl-L-glutamate from L-glutamate and N(2)-acetyl-L-ornithine (cyclic): step 1/1. It participates in amino-acid biosynthesis; L-arginine biosynthesis; N(2)-acetyl-L-ornithine from L-glutamate: step 1/4. Its function is as follows. Catalyzes two activities which are involved in the cyclic version of arginine biosynthesis: the synthesis of N-acetylglutamate from glutamate and acetyl-CoA as the acetyl donor, and of ornithine by transacetylation between N(2)-acetylornithine and glutamate. The sequence is that of Arginine biosynthesis bifunctional protein ArgJ from Nitratidesulfovibrio vulgaris (strain ATCC 29579 / DSM 644 / CCUG 34227 / NCIMB 8303 / VKM B-1760 / Hildenborough) (Desulfovibrio vulgaris).